The sequence spans 310 residues: 4-diphosphocytidyl-2-C-methyl-D-erythritol kinase (310 aa).

Lysine 20 is an active-site residue. An ATP-binding site is contributed by 106–116 (PMGGGLGGGSS). Residue aspartate 148 is part of the active site.

This sequence belongs to the GHMP kinase family. IspE subfamily. Homodimer.

The catalysed reaction is 4-CDP-2-C-methyl-D-erythritol + ATP = 4-CDP-2-C-methyl-D-erythritol 2-phosphate + ADP + H(+). It participates in isoprenoid biosynthesis; isopentenyl diphosphate biosynthesis via DXP pathway; isopentenyl diphosphate from 1-deoxy-D-xylulose 5-phosphate: step 3/6. Catalyzes the phosphorylation of the position 2 hydroxy group of 4-diphosphocytidyl-2C-methyl-D-erythritol. This is 4-diphosphocytidyl-2-C-methyl-D-erythritol kinase from Yersinia pseudotuberculosis serotype O:3 (strain YPIII).